A 306-amino-acid polypeptide reads, in one-letter code: uncharacterized protein (306 aa).

Asp204 functions as the Proton acceptor in the catalytic mechanism.

This sequence belongs to the aminoglycoside phosphotransferase family.

This is an uncharacterized protein from Bacillus subtilis (strain 168).